The chain runs to 662 residues: DNA helicase/primase complex-associated protein (662 aa).

The protein belongs to the herpesviridae HEPA family. In terms of assembly, associates with the primase and the helicase to form the helicase-primase complex. Interacts with the origin-binding protein. Interacts with the polymerase catalytic subunit.

The protein resides in the host nucleus. In terms of biological role, component of the helicase/primase complex. Unwinds the DNA at the replication forks and generates single-stranded DNA for both leading and lagging strand synthesis. The primase synthesizes short RNA primers on the lagging strand that the polymerase presumably elongates using dNTPs. The primase-associated factor has no known catalytic activity in the complex and may serve to facilitate the formation of the replisome by directly interacting with the origin-binding protein and the polymerase. This Human herpesvirus 6B (strain Z29) (HHV-6 variant B) protein is DNA helicase/primase complex-associated protein (U74).